The chain runs to 429 residues: MKSSYNLRSIAAKVVGQVLDQGQSLSALLPVHQREVSEKDRALLQELCFGVLRVLPQLEWCIQQLMAKPLTGKQRTLHYLIMVGIYQLHYTRIPPHAALAETVEGAVALKRPQLKGLINGVLRQFQRQQEELIQREANHSSHYLHPSWLLARIEHAYPNHWQTIVEANNQRPPMWLRVNRLHHTREAYLNLLAQEGIEAFPHTEFTDAIRLASPCAVDQLPGFSQGWATVQDASAQGCVYWLDPQDGEQILDLCAAPGGKTTHILEAAPQSHVLAVDIDETRLGRVKENLLRLQMHAEVKQGDGRYPDSWCEGRMFDRILLDAPCSATGVIRRHPDIKWLRRDRDIEELVALQKEIFDAIWPHLKVGGTMVYATCSILPQENAQQVTDFLTRHADATLVDTGTRELPGIQMLPHADGGDGFFYAKLVKN.

S-adenosyl-L-methionine is bound by residues 254-260, D277, D303, and D322; that span reads CAAPGGK. The active-site Nucleophile is C375.

Belongs to the class I-like SAM-binding methyltransferase superfamily. RsmB/NOP family.

It is found in the cytoplasm. It carries out the reaction cytidine(967) in 16S rRNA + S-adenosyl-L-methionine = 5-methylcytidine(967) in 16S rRNA + S-adenosyl-L-homocysteine + H(+). Functionally, specifically methylates the cytosine at position 967 (m5C967) of 16S rRNA. In Pectobacterium carotovorum subsp. carotovorum (strain PC1), this protein is Ribosomal RNA small subunit methyltransferase B.